The sequence spans 423 residues: Lysosomal acid phosphatase (423 aa).

An N-terminal signal peptide occupies residues 1–30; the sequence is MAGRQSGWSQAALLQFLLGMCLMVMPPIQA. At 31–380 the chain is on the lumenal side; that stretch reads RSLRFVTLLY…QLASDTADTE (350 aa). The active-site Nucleophile is the His42. N-linked (GlcNAc...) asparagine glycosylation is found at Asn92, Asn133, Asn167, Asn177, Asn191, Asn197, and Asn267. Intrachain disulfides connect Cys159/Cys370, Cys212/Cys310, and Cys345/Cys349. The Proton donor role is filled by Asp287. 2 N-linked (GlcNAc...) asparagine glycosylation sites follow: Asn322 and Asn331. The helical transmembrane segment at 381–401 threads the bilayer; sequence VIVALAVCGSILFLLIVLLLT. At 402 to 423 the chain is on the cytoplasmic side; it reads VLFRMQAQPPGYHHVADREDHA.

This sequence belongs to the histidine acid phosphatase family. In terms of processing, the membrane-bound form is converted to the soluble form by sequential proteolytic processing. First, the C-terminal cytoplasmic tail is removed. Cleavage by a lysosomal protease releases the soluble form in the lysosome lumen.

Its subcellular location is the lysosome membrane. It localises to the lysosome lumen. It carries out the reaction a phosphate monoester + H2O = an alcohol + phosphate. The chain is Lysosomal acid phosphatase (Acp2) from Rattus norvegicus (Rat).